A 141-amino-acid polypeptide reads, in one-letter code: Nucleoside diphosphate kinase (141 aa).

ATP contacts are provided by lysine 11, phenylalanine 59, arginine 87, threonine 93, arginine 104, and asparagine 114. Histidine 117 acts as the Pros-phosphohistidine intermediate in catalysis.

Belongs to the NDK family. As to quaternary structure, homotetramer. Requires Mg(2+) as cofactor.

The protein resides in the cytoplasm. It carries out the reaction a 2'-deoxyribonucleoside 5'-diphosphate + ATP = a 2'-deoxyribonucleoside 5'-triphosphate + ADP. The catalysed reaction is a ribonucleoside 5'-diphosphate + ATP = a ribonucleoside 5'-triphosphate + ADP. In terms of biological role, major role in the synthesis of nucleoside triphosphates other than ATP. The ATP gamma phosphate is transferred to the NDP beta phosphate via a ping-pong mechanism, using a phosphorylated active-site intermediate. The chain is Nucleoside diphosphate kinase from Polynucleobacter asymbioticus (strain DSM 18221 / CIP 109841 / QLW-P1DMWA-1) (Polynucleobacter necessarius subsp. asymbioticus).